Consider the following 131-residue polypeptide: Ribonuclease P protein component (131 aa).

It belongs to the RnpA family. As to quaternary structure, consists of a catalytic RNA component (M1 or rnpB) and a protein subunit.

It catalyses the reaction Endonucleolytic cleavage of RNA, removing 5'-extranucleotides from tRNA precursor.. Its function is as follows. RNaseP catalyzes the removal of the 5'-leader sequence from pre-tRNA to produce the mature 5'-terminus. It can also cleave other RNA substrates such as 4.5S RNA. The protein component plays an auxiliary but essential role in vivo by binding to the 5'-leader sequence and broadening the substrate specificity of the ribozyme. This is Ribonuclease P protein component from Cyanothece sp. (strain PCC 7425 / ATCC 29141).